Reading from the N-terminus, the 149-residue chain is Calmodulin-like protein 3 (149 aa).

4 consecutive EF-hand domains span residues 8–43 (EQIA…LGQN), 44–79 (PTEA…KMKD), 81–116 (DSEE…LGEK), and 117–149 (LSDE…LVSK). Ca(2+) is bound by residues D21, D23, D25, C27, E32, D57, D59, N61, T63, E68, D94, D96, N98, E105, D130, D132, D134, Q136, and E141.

The protein belongs to the calmodulin family. As to quaternary structure, interacts with MYO10, the interaction is calcium-dependent and essential for MYO10 function in filopodial extension.

In terms of biological role, may function as a specific light chain of unconventional myosin-10 (MYO10), also enhances MYO10 translation, possibly by acting as a chaperone for the emerging MYO10 heavy chain protein. May compete with calmodulin by binding, with different affinities, to cellular substrates. The protein is Calmodulin-like protein 3 (Calml3) of Rattus norvegicus (Rat).